Reading from the N-terminus, the 398-residue chain is Homeobox protein knotted-1-like 1 (398 aa).

Disordered stretches follow at residues 20-61 (SPIS…HHHQ), 78-102 (NCFRSDHDQPNNNNNPSVKSEASSS), and 241-273 (LNNPDGKSDNMGSSDEEQENNSGGETELPEIDP). Residues 23-56 (SSSNKNDNTSDTNNNNNNNNSSNYGPGYNNTNNN) are compositionally biased toward low complexity. Polar residues predominate over residues 87-102 (PNNNNNPSVKSEASSS). The 21-residue stretch at 279–299 (ELKNHLLKKYSGYLSSLKQEL) folds into the ELK domain. Residues 300–363 (SKKKKKGKLP…NQRKRHWKPS (64 aa)) constitute a DNA-binding region (homeobox; TALE-type).

Belongs to the TALE/KNOX homeobox family. As to quaternary structure, may form heterodimeric complex with the TALE/BELL proteins BEL1, BLH2, BLH8/PNF and BLH9/PNY. Interacts with OFP1, OFP2, OFP4, OFP6 and OFP12. Interacts with CCT7 and CCT8. Interacts with KNATM-B. Binds to AGO10/PNH. Interacts with BZIP30. In terms of tissue distribution, expressed in the vegetative meristem. Present in the base of flower primordia.

The protein localises to the nucleus. May play a role in meristem function, and may be involved in maintaining cells in an undifferentiated, meristematic state, and its expression disappears at the same time the shoot apex undergoes the transition from vegetative to reproductive development. Positive regulator of LATERAL ORGAN BOUNDARIES (LOB). Probably binds to the DNA sequence 5'-TGAC-3'. Able to traffic from the L1 to the L2/L3 layers of the meristem, presumably through plasmodesmata. The chain is Homeobox protein knotted-1-like 1 (KNAT1) from Arabidopsis thaliana (Mouse-ear cress).